A 369-amino-acid polypeptide reads, in one-letter code: Probable trehalose-phosphate phosphatase D (369 aa).

The disordered stretch occupies residues 63–85 (RASSPTRTRPGNISPLPESDEED).

It belongs to the trehalose phosphatase family. It depends on a divalent metal cation as a cofactor.

It carries out the reaction alpha,alpha-trehalose 6-phosphate + H2O = alpha,alpha-trehalose + phosphate. It functions in the pathway glycan biosynthesis; trehalose biosynthesis. Its function is as follows. Removes the phosphate from trehalose 6-phosphate to produce free trehalose. Trehalose accumulation in plant may improve abiotic stress tolerance. This is Probable trehalose-phosphate phosphatase D (TPPD) from Arabidopsis thaliana (Mouse-ear cress).